The sequence spans 184 residues: Elongation factor P (184 aa).

Belongs to the elongation factor P family.

It is found in the cytoplasm. It participates in protein biosynthesis; polypeptide chain elongation. Functionally, involved in peptide bond synthesis. Stimulates efficient translation and peptide-bond synthesis on native or reconstituted 70S ribosomes in vitro. Probably functions indirectly by altering the affinity of the ribosome for aminoacyl-tRNA, thus increasing their reactivity as acceptors for peptidyl transferase. The polypeptide is Elongation factor P (Polaromonas naphthalenivorans (strain CJ2)).